A 394-amino-acid polypeptide reads, in one-letter code: 1-deoxy-D-xylulose 5-phosphate reductoisomerase (394 aa).

NADPH is bound by residues threonine 12, glycine 13, serine 14, isoleucine 15, glycine 38, asparagine 41, and asparagine 132. Lysine 133 is a binding site for 1-deoxy-D-xylulose 5-phosphate. Residue glutamate 134 participates in NADPH binding. Residue aspartate 156 participates in Mn(2+) binding. Residues serine 157, glutamate 158, serine 182, and histidine 205 each coordinate 1-deoxy-D-xylulose 5-phosphate. Glutamate 158 provides a ligand contact to Mn(2+). An NADPH-binding site is contributed by glycine 211. 1-deoxy-D-xylulose 5-phosphate is bound by residues serine 218, asparagine 223, lysine 224, and glutamate 227. Glutamate 227 provides a ligand contact to Mn(2+).

The protein belongs to the DXR family. Requires Mg(2+) as cofactor. Mn(2+) serves as cofactor.

It catalyses the reaction 2-C-methyl-D-erythritol 4-phosphate + NADP(+) = 1-deoxy-D-xylulose 5-phosphate + NADPH + H(+). It functions in the pathway isoprenoid biosynthesis; isopentenyl diphosphate biosynthesis via DXP pathway; isopentenyl diphosphate from 1-deoxy-D-xylulose 5-phosphate: step 1/6. Catalyzes the NADPH-dependent rearrangement and reduction of 1-deoxy-D-xylulose-5-phosphate (DXP) to 2-C-methyl-D-erythritol 4-phosphate (MEP). This is 1-deoxy-D-xylulose 5-phosphate reductoisomerase from Paenarthrobacter aurescens (strain TC1).